Reading from the N-terminus, the 339-residue chain is Spore coat polysaccharide biosynthesis protein SpsG (339 aa).

Residues 241-261 (IVAGGISLYEAICIGVPCLVL) traverse the membrane as a helical segment.

To M.jannaschii MJ1062.

The protein resides in the cell membrane. The protein operates within spore coat biogenesis; spore coat polysaccharide biosynthesis. The polypeptide is Spore coat polysaccharide biosynthesis protein SpsG (spsG) (Bacillus subtilis (strain 168)).